The primary structure comprises 538 residues: Eukaryotic translation initiation factor 3 subunit L (538 aa).

Positions 305 to 513 (TFSDILLYIQ…IHIADTKVSH (209 aa)) constitute a PCI domain.

This sequence belongs to the eIF-3 subunit L family. Component of the eukaryotic translation initiation factor 3 (eIF-3) complex. The eIF-3 complex interacts with pix.

It localises to the cytoplasm. Functionally, component of the eukaryotic translation initiation factor 3 (eIF-3) complex, which is involved in protein synthesis of a specialized repertoire of mRNAs and, together with other initiation factors, stimulates binding of mRNA and methionyl-tRNAi to the 40S ribosome. The eIF-3 complex specifically targets and initiates translation of a subset of mRNAs involved in cell proliferation. The protein is Eukaryotic translation initiation factor 3 subunit L of Drosophila virilis (Fruit fly).